We begin with the raw amino-acid sequence, 451 residues long: Phosphoglucosamine mutase (451 aa).

S104 serves as the catalytic Phosphoserine intermediate. Mg(2+) contacts are provided by S104, D249, D251, and D253. S104 carries the phosphoserine modification.

This sequence belongs to the phosphohexose mutase family. The cofactor is Mg(2+). Post-translationally, activated by phosphorylation.

It catalyses the reaction alpha-D-glucosamine 1-phosphate = D-glucosamine 6-phosphate. Its function is as follows. Catalyzes the conversion of glucosamine-6-phosphate to glucosamine-1-phosphate. The polypeptide is Phosphoglucosamine mutase (Psychrobacter sp. (strain PRwf-1)).